We begin with the raw amino-acid sequence, 147 residues long: Mitochondrial import receptor subunit TOM20 homolog (147 aa).

The Mitochondrial intermembrane segment spans residues 1–3 (MVA). Residues 4-26 (VGKTSAIAAGVCGALLLGYCIYF) traverse the membrane as a helical segment. Over 27-147 (DRKRRSDPNF…AQNLSEDDVE (121 aa)) the chain is Cytoplasmic.

The protein belongs to the Tom20 family. As to quaternary structure, forms part of the preprotein translocase complex of the outer mitochondrial membrane (TOM complex). Interacts with tom22.

The protein resides in the mitochondrion outer membrane. In terms of biological role, central component of the receptor complex responsible for the recognition and translocation of cytosolically synthesized mitochondrial preproteins. Together with tom22 functions as the transit peptide receptor at the surface of the mitochondrion outer membrane and facilitates the movement of preproteins into the tom40 translocation pore. The sequence is that of Mitochondrial import receptor subunit TOM20 homolog (tomm20) from Xenopus laevis (African clawed frog).